The sequence spans 77 residues: Translation initiation factor IF-1, chloroplastic (77 aa).

One can recognise an S1-like domain in the interval 1 to 71; the sequence is MKEQKLIHEG…TRGRIIYRLR (71 aa).

The protein belongs to the IF-1 family. Component of the 30S ribosomal translation pre-initiation complex which assembles on the 30S ribosome in the order IF-2 and IF-3, IF-1 and N-formylmethionyl-tRNA(fMet); mRNA recruitment can occur at any time during PIC assembly.

Its subcellular location is the plastid. It localises to the chloroplast. Its function is as follows. One of the essential components for the initiation of protein synthesis. Stabilizes the binding of IF-2 and IF-3 on the 30S subunit to which N-formylmethionyl-tRNA(fMet) subsequently binds. Helps modulate mRNA selection, yielding the 30S pre-initiation complex (PIC). Upon addition of the 50S ribosomal subunit IF-1, IF-2 and IF-3 are released leaving the mature 70S translation initiation complex. The chain is Translation initiation factor IF-1, chloroplastic from Ceratophyllum demersum (Rigid hornwort).